A 389-amino-acid polypeptide reads, in one-letter code: Phospho-N-acetylmuramoyl-pentapeptide-transferase (389 aa).

A run of 10 helical transmembrane segments spans residues 25–45, 73–93, 97–117, 135–155, 190–210, 222–242, 258–278, 286–306, 311–331, and 366–386; these read RAVM…PWVI, TMGG…WGDL, FIWI…VDDY, FWQS…VSEA, ISYP…IVGA, GLVI…AYVM, GAGE…AFLW, VFMG…VAVI, IVLF…MLQV, and QVVV…LSTL.

It belongs to the glycosyltransferase 4 family. MraY subfamily. The cofactor is Mg(2+).

Its subcellular location is the cell inner membrane. It catalyses the reaction UDP-N-acetyl-alpha-D-muramoyl-L-alanyl-gamma-D-glutamyl-meso-2,6-diaminopimeloyl-D-alanyl-D-alanine + di-trans,octa-cis-undecaprenyl phosphate = di-trans,octa-cis-undecaprenyl diphospho-N-acetyl-alpha-D-muramoyl-L-alanyl-D-glutamyl-meso-2,6-diaminopimeloyl-D-alanyl-D-alanine + UMP. It participates in cell wall biogenesis; peptidoglycan biosynthesis. Catalyzes the initial step of the lipid cycle reactions in the biosynthesis of the cell wall peptidoglycan: transfers peptidoglycan precursor phospho-MurNAc-pentapeptide from UDP-MurNAc-pentapeptide onto the lipid carrier undecaprenyl phosphate, yielding undecaprenyl-pyrophosphoryl-MurNAc-pentapeptide, known as lipid I. The polypeptide is Phospho-N-acetylmuramoyl-pentapeptide-transferase (Burkholderia multivorans (strain ATCC 17616 / 249)).